The primary structure comprises 298 residues: Ethanolamine ammonia-lyase small subunit (298 aa).

V210, E231, and C261 together coordinate adenosylcob(III)alamin.

The protein belongs to the EutC family. As to quaternary structure, the basic unit is a heterodimer which dimerizes to form tetramers. The heterotetramers trimerize; 6 large subunits form a core ring with 6 small subunits projecting outwards. It depends on adenosylcob(III)alamin as a cofactor.

The protein localises to the bacterial microcompartment. The enzyme catalyses ethanolamine = acetaldehyde + NH4(+). Its pathway is amine and polyamine degradation; ethanolamine degradation. In terms of biological role, catalyzes the deamination of various vicinal amino-alcohols to oxo compounds. Allows this organism to utilize ethanolamine as the sole source of nitrogen and carbon in the presence of external vitamin B12. This Salmonella dublin (strain CT_02021853) protein is Ethanolamine ammonia-lyase small subunit.